A 370-amino-acid polypeptide reads, in one-letter code: GTPase Obg (370 aa).

In terms of domain architecture, Obg spans 1–159; sequence MKFIDEARIE…RMVRLELKVL (159 aa). A disordered region spans residues 127–147; the sequence is NLHFKSSTNRAPRQKTDGKPG. The region spanning 160–334 is the OBG-type G domain; the sequence is ADVGLLGMPN…LCYAVYDYLA (175 aa). GTP-binding positions include 166–173, 191–195, 213–216, 284–287, and 315–317; these read GMPNAGKS, FTTLA, DIPG, NKLD, and SAL. The Mg(2+) site is built by Ser-173 and Thr-193.

It belongs to the TRAFAC class OBG-HflX-like GTPase superfamily. OBG GTPase family. As to quaternary structure, monomer. It depends on Mg(2+) as a cofactor.

Its subcellular location is the cytoplasm. Its function is as follows. An essential GTPase which binds GTP, GDP and possibly (p)ppGpp with moderate affinity, with high nucleotide exchange rates and a fairly low GTP hydrolysis rate. Plays a role in control of the cell cycle, stress response, ribosome biogenesis and in those bacteria that undergo differentiation, in morphogenesis control. The polypeptide is GTPase Obg (Paraburkholderia phymatum (strain DSM 17167 / CIP 108236 / LMG 21445 / STM815) (Burkholderia phymatum)).